Here is a 251-residue protein sequence, read N- to C-terminus: MIGRTFKTDIADYETARPDYPPQITEWLNDEFSVNETSTILELGAGSGKLTPRIIASQPKEIIAVDTYVEMLDVLKKKFPNVDCRVGSAMAIPLEDESVDLVACGQCFHWFANEEALKEIYRVLKPNGKLALIWNIRDNSVPWVEKCSQLLEKCRGGPLNMFEKAAELFPGYGFTELKQSLFTSAKKYSIEDLHRLMNSFSSINRLPVEEKEKMHAELDEIIKTIPRAQNTDQVDFNILTVAYSSEKVPIN.

This sequence belongs to the methyltransferase superfamily.

Its subcellular location is the cytoplasm. The protein localises to the nucleus. Functionally, probable methyltransferase. This is an uncharacterized protein from Schizosaccharomyces pombe (strain 972 / ATCC 24843) (Fission yeast).